The chain runs to 386 residues: WD repeat-containing protein 89 (386 aa).

WD repeat units lie at residues K21 to E65, G68 to V107, G112 to S156, T167 to A207, N213 to P253, and G318 to T357.

This chain is WD repeat-containing protein 89 (Wdr89), found in Mus musculus (Mouse).